A 262-amino-acid chain; its full sequence is Outer dense fiber protein 1 (262 aa).

Residues Ser-5 and Ser-10 each carry the phosphoserine modification. Repeat 1 spans residues 34 to 38 (RCLCD). The interval 34 to 77 (RCLCDLYMHPYCCCDLHPYPYCLCYSKRSRSCGLCDLYPCCLCD) is 2 X 5 AA repeats of [RC]-C-L-C-D. Ser-64 carries the phosphoserine modification. Residues 73 to 77 (CCLCD) form repeat 2. Ser-86, Ser-122, Ser-123, Ser-151, Ser-167, Ser-189, and Ser-194 each carry phosphoserine. The segment at 209–250 (CNPCNPCSPCNPCNPCNPCNPCSPCSPCSPCNPCDPCNPCYP) is C-X-P repeat region.

As to quaternary structure, interacts (via leucine zipper motif) with TCP11. Interacts with SPAG4. Interacts with KLC3. Interacts with CCDC42.

Its subcellular location is the cell projection. It localises to the cilium. The protein resides in the flagellum. It is found in the cytoplasm. The protein localises to the cytoskeleton. Its subcellular location is the microtubule organizing center. It localises to the centrosome. In terms of biological role, component of the outer dense fibers (ODF) of spermatozoa. ODF are filamentous structures located on the outside of the axoneme in the midpiece and principal piece of the mammalian sperm tail and may help to maintain the passive elastic structures and elastic recoil of the sperm tail. This is Outer dense fiber protein 1 (ODF1) from Sus scrofa (Pig).